A 346-amino-acid chain; its full sequence is Aspartate-semialdehyde dehydrogenase (346 aa).

Residues 12-15 and 40-41 contribute to the NADP(+) site; these read SGAV and RS. Arg-101 lines the phosphate pocket. The active-site Acyl-thioester intermediate is the Cys-131. Gln-158 is a binding site for substrate. 161–162 provides a ligand contact to NADP(+); the sequence is SG. Lys-225 is a binding site for phosphate. Arg-246 lines the substrate pocket. His-253 (proton acceptor) is an active-site residue. An NADP(+)-binding site is contributed by Gln-326.

This sequence belongs to the aspartate-semialdehyde dehydrogenase family. Homodimer.

The catalysed reaction is L-aspartate 4-semialdehyde + phosphate + NADP(+) = 4-phospho-L-aspartate + NADPH + H(+). The protein operates within amino-acid biosynthesis; L-lysine biosynthesis via DAP pathway; (S)-tetrahydrodipicolinate from L-aspartate: step 2/4. It participates in amino-acid biosynthesis; L-methionine biosynthesis via de novo pathway; L-homoserine from L-aspartate: step 2/3. It functions in the pathway amino-acid biosynthesis; L-threonine biosynthesis; L-threonine from L-aspartate: step 2/5. Functionally, catalyzes the NADPH-dependent formation of L-aspartate-semialdehyde (L-ASA) by the reductive dephosphorylation of L-aspartyl-4-phosphate. In Helicobacter pylori (strain J99 / ATCC 700824) (Campylobacter pylori J99), this protein is Aspartate-semialdehyde dehydrogenase.